We begin with the raw amino-acid sequence, 174 residues long: Protein GrpE (174 aa).

Belongs to the GrpE family. In terms of assembly, homodimer.

The protein localises to the cytoplasm. Participates actively in the response to hyperosmotic and heat shock by preventing the aggregation of stress-denatured proteins, in association with DnaK and GrpE. It is the nucleotide exchange factor for DnaK and may function as a thermosensor. Unfolded proteins bind initially to DnaJ; upon interaction with the DnaJ-bound protein, DnaK hydrolyzes its bound ATP, resulting in the formation of a stable complex. GrpE releases ADP from DnaK; ATP binding to DnaK triggers the release of the substrate protein, thus completing the reaction cycle. Several rounds of ATP-dependent interactions between DnaJ, DnaK and GrpE are required for fully efficient folding. This chain is Protein GrpE, found in Pseudothermotoga lettingae (strain ATCC BAA-301 / DSM 14385 / NBRC 107922 / TMO) (Thermotoga lettingae).